The primary structure comprises 135 residues: Small ribosomal subunit protein uS11 (135 aa).

Residues 1–22 (MPPKSRTAAGAKKVRRKEKKNV) are disordered.

This sequence belongs to the universal ribosomal protein uS11 family. In terms of assembly, part of the 30S ribosomal subunit. Interacts with proteins S7 and S18. Binds to IF-3.

In terms of biological role, located on the platform of the 30S subunit, it bridges several disparate RNA helices of the 16S rRNA. Forms part of the Shine-Dalgarno cleft in the 70S ribosome. The chain is Small ribosomal subunit protein uS11 from Nocardioides sp. (strain ATCC BAA-499 / JS614).